The following is a 184-amino-acid chain: ATP synthase subunit b, chloroplastic (184 aa).

A helical membrane pass occupies residues 27–49 (LATNLINLSVVLGVLVFFGKGVL).

Belongs to the ATPase B chain family. In terms of assembly, F-type ATPases have 2 components, F(1) - the catalytic core - and F(0) - the membrane proton channel. F(1) has five subunits: alpha(3), beta(3), gamma(1), delta(1), epsilon(1). F(0) has four main subunits: a(1), b(1), b'(1) and c(10-14). The alpha and beta chains form an alternating ring which encloses part of the gamma chain. F(1) is attached to F(0) by a central stalk formed by the gamma and epsilon chains, while a peripheral stalk is formed by the delta, b and b' chains.

Its subcellular location is the plastid. The protein resides in the chloroplast thylakoid membrane. Functionally, f(1)F(0) ATP synthase produces ATP from ADP in the presence of a proton or sodium gradient. F-type ATPases consist of two structural domains, F(1) containing the extramembraneous catalytic core and F(0) containing the membrane proton channel, linked together by a central stalk and a peripheral stalk. During catalysis, ATP synthesis in the catalytic domain of F(1) is coupled via a rotary mechanism of the central stalk subunits to proton translocation. In terms of biological role, component of the F(0) channel, it forms part of the peripheral stalk, linking F(1) to F(0). The polypeptide is ATP synthase subunit b, chloroplastic (Cicer arietinum (Chickpea)).